Here is a 1392-residue protein sequence, read N- to C-terminus: MSPHNFEFHLPLSPEELLKSGGVNQYVVREVLPVKHLSSQLRAFQSAFRAQGPLAILEHFDTVYSILHHFRSIEPGLKEDTLEFLKKVVSRHSQELSSILDDAALSGSDRSAHLNALKMNCYALIRLLESFENMTSQTSLIDLDIGGKGKRARAKATLGFDWEEERQPVLQLLTQLLQLDIRHLWNHSAIEEEFVSLVTGCCYRLLENPTISHQKNRSTKEAIAHLLGVALVRYNHMLSATVKIIQMLQHFEHLPPVLVTAVSLWATDYGMKSIVGEIVREIGQKCPQELSRDTAGAKGFAAFLTELAERIPAVLMANMCILLDHLDGENYMMRNAVLAAIAEMVLQVLNGDQLEESARETRDQFLDILQAHGHDVNSFVRSRVLQLFARIVQQKALPLTRFQAVVALAVGRLADKSVLVCKNAIQLLASFLANNPFSCKLSDIDLAGPLQKEIQKLQEMRAQRRSAAATAALDPEEEWDAMLPELKSTLQQLLKLPQEEGDHQIADAETAEEVKGRIRQLLAKASYKQAIVLTREATSHFQESEPFSHTEPEENSFLNLLGLIFKGPEASTQDSHGDTDPGLTGSKDSPSVPEPEGSQSNDELVKQEMLVQYLQDAYGFSQKITEAIGIISKMMYENTTTVVQEVIEFFVMVFQFGVPQALFGVRRMLPLIWSKEPGVREAVLNAYRQLYLNPKGDSARAKAQTLIHNLSLLLVDASVGTIQCLEEILCEFVQKDEVKPAVIQLLWERATEKVPSSPLERCSSVMLLGMMARGKPEIVGSNLDALVRVGLDEKSPQDYRLAQQVCLAIANISDRRKPSLGERHPPFRLPQEHRLFERLQDMVTKGFAHPDPLWIPFKEVAVTLTYQLAESPDVLCAQMLQGCAKQVLEKLEKNATEADPKETAPRLPTFLLMNLLSLAGDVALQQLVHLEQAVSGELGRRRVLREEQEHRAKEPKEKTASSETTMEEELGLVGGATADDTEAELIRSICEKELLDGNQVLAAFVPLLLKVCNNPGLYSNPELCAAASLALGKFCMISAPFCDSQLRLLFTMLEKSSLPTVRSNLMVATGDLAIRFPNLVDPWTPHLYARLRDPAQQVRKTAGLVMTHLILKDMVKVKGQVSEMAVLLIDPVPQIAALAKNFFNELSHKGNAIYNLLPDIISRLSDPEGGVEEEPFHTIMKQLLSYITKDKQTESLVEKLCQRFRTARTERQYRDLAYCMSQLPLTERGLQKMLDNFECFGDKLLDESVFSAFLSIVGKLRRGAKPEGKAIIDEFEQKLRACHTRGMDGIEEFETGQGGSQRALSAKKPSAVSRLQPLTSVDSDNDFVTPKPRRTKPGRPQTQQRKKSQRKAKVVFLSDESSEDELSAEMTEEETPKRTTPIRRASGRRHRS.

Residues 1–593 (MSPHNFEFHL…TGSKDSPSVP (593 aa)) form an interaction with SMC2 and SMC4 region. Phosphoserine is present on residues S20 and S575. Disordered stretches follow at residues 569–602 (EAST…QSND), 945–966 (REEQ…ETTM), and 1293–1392 (FETG…RHRS). Residues 945–960 (REEQEHRAKEPKEKTA) show a composition bias toward basic and acidic residues. 4 positions are modified to phosphoserine: S1300, S1305, S1320, and S1323. T1329 bears the Phosphothreonine mark. The short motif at 1332-1353 (PRRTKPGRPQTQQRKKSQRKAK) is the Bipartite nuclear localization signal element. Basic residues predominate over residues 1344 to 1353 (QRKKSQRKAK). Phosphoserine occurs at positions 1358, 1361, 1362, and 1367. The span at 1360–1373 (ESSEDELSAEMTEE) shows a compositional bias: acidic residues. A phosphothreonine; by CDK1 mark is found at T1375 and T1380. Position 1386 is a phosphoserine (S1386).

The protein belongs to the CND1 (condensin subunit 1) family. In terms of assembly, component of the condensin complex, which contains the SMC2 and SMC4 heterodimer, and three non SMC subunits that probably regulate the complex: NCAPH/BRRN1, NCAPD2/CAPD2 and NCAPG. Interacts with histones H1 and H3. Phosphorylated by CDK1. Its phosphorylation, as well as that of NCAPH and NCAPG subunits, activates the condensin complex and is required for chromosome condensation.

The protein resides in the nucleus. It localises to the cytoplasm. The protein localises to the chromosome. Its function is as follows. Regulatory subunit of the condensin complex, a complex required for conversion of interphase chromatin into mitotic-like condense chromosomes. The condensin complex probably introduces positive supercoils into relaxed DNA in the presence of type I topoisomerases and converts nicked DNA into positive knotted forms in the presence of type II topoisomerases. May target the condensin complex to DNA via its C-terminal domain. May promote the resolution of double-strand DNA catenanes (intertwines) between sister chromatids. Condensin-mediated compaction likely increases tension in catenated sister chromatids, providing directionality for type II topoisomerase-mediated strand exchanges toward chromatid decatenation. Required for decatenation of non-centromeric ultrafine DNA bridges during anaphase. Early in neurogenesis, may play an essential role to ensure accurate mitotic chromosome condensation in neuron stem cells, ultimately affecting neuron pool and cortex size. The polypeptide is Condensin complex subunit 1 (Ncapd2) (Mus musculus (Mouse)).